Consider the following 804-residue polypeptide: Probable replication endonuclease from prophage-like region 1 (804 aa).

Catalysis depends on O-(5'-phospho-DNA)-tyrosine intermediate residues Tyr498 and Tyr502.

Belongs to the phage GPA family.

Possible endonuclease which induces a single-strand cut and initiates DNA replication. The polypeptide is Probable replication endonuclease from prophage-like region 1 (Salmonella typhi).